We begin with the raw amino-acid sequence, 206 residues long: Peptidyl-tRNA hydrolase (206 aa).

Residue tyrosine 19 coordinates tRNA. Histidine 24 functions as the Proton acceptor in the catalytic mechanism. Residues phenylalanine 70, asparagine 72, and asparagine 118 each coordinate tRNA.

This sequence belongs to the PTH family. In terms of assembly, monomer.

It localises to the cytoplasm. It catalyses the reaction an N-acyl-L-alpha-aminoacyl-tRNA + H2O = an N-acyl-L-amino acid + a tRNA + H(+). In terms of biological role, hydrolyzes ribosome-free peptidyl-tRNAs (with 1 or more amino acids incorporated), which drop off the ribosome during protein synthesis, or as a result of ribosome stalling. Functionally, catalyzes the release of premature peptidyl moieties from peptidyl-tRNA molecules trapped in stalled 50S ribosomal subunits, and thus maintains levels of free tRNAs and 50S ribosomes. The chain is Peptidyl-tRNA hydrolase from Synechococcus sp. (strain CC9902).